The sequence spans 337 residues: Glyceraldehyde-3-phosphate dehydrogenase (337 aa).

Residues 11–12 (TV), 34–35 (TR), and G110 contribute to the NADP(+) site. 139 to 141 (SCN) serves as a coordination point for D-glyceraldehyde 3-phosphate. C140 functions as the Nucleophile in the catalytic mechanism. D171 lines the NADP(+) pocket. Residue 194–195 (HG) participates in D-glyceraldehyde 3-phosphate binding. Q300 serves as a coordination point for NADP(+).

The protein belongs to the glyceraldehyde-3-phosphate dehydrogenase family. Homotetramer.

The protein localises to the cytoplasm. The catalysed reaction is D-glyceraldehyde 3-phosphate + phosphate + NADP(+) = (2R)-3-phospho-glyceroyl phosphate + NADPH + H(+). It catalyses the reaction D-glyceraldehyde 3-phosphate + phosphate + NAD(+) = (2R)-3-phospho-glyceroyl phosphate + NADH + H(+). It functions in the pathway carbohydrate degradation; glycolysis; pyruvate from D-glyceraldehyde 3-phosphate: step 1/5. Functionally, exhibits a dual-cofactor specificity, with a marked preference for NADP(+) over NAD(+). This Methanothermus fervidus protein is Glyceraldehyde-3-phosphate dehydrogenase (gap).